The primary structure comprises 276 residues: NH(3)-dependent NAD(+) synthetase (276 aa).

43–50 (GISGGVDS) provides a ligand contact to ATP. Aspartate 49 contributes to the Mg(2+) binding site. A deamido-NAD(+)-binding site is contributed by arginine 146. Threonine 166 is an ATP binding site. Glutamate 171 is a Mg(2+) binding site. The deamido-NAD(+) site is built by lysine 179 and aspartate 186. Residues lysine 195 and threonine 217 each coordinate ATP. Deamido-NAD(+) is bound at residue 266 to 267 (HK).

The protein belongs to the NAD synthetase family. As to quaternary structure, homodimer.

The enzyme catalyses deamido-NAD(+) + NH4(+) + ATP = AMP + diphosphate + NAD(+) + H(+). The protein operates within cofactor biosynthesis; NAD(+) biosynthesis; NAD(+) from deamido-NAD(+) (ammonia route): step 1/1. In terms of biological role, catalyzes the ATP-dependent amidation of deamido-NAD to form NAD. Uses ammonia as a nitrogen source. The protein is NH(3)-dependent NAD(+) synthetase of Shewanella baltica (strain OS185).